A 1357-amino-acid chain; its full sequence is Kinectin (1357 aa).

The Cytoplasmic segment spans residues 1–6 (MEFYES). The helical; Signal-anchor for type II membrane protein transmembrane segment at 7 to 29 (AYFIVLIPSIVITVIFLFFWLFM) threads the bilayer. Residues 30–1357 (KETLYDEVLA…KEKEHYQVLE (1328 aa)) lie on the Lumenal side of the membrane. Disordered regions lie at residues 48-81 (IPTK…ESVP) and 103-218 (NVVE…KQKT). A Phosphoserine; by FAM20C modification is found at S75. S77 bears the Phosphoserine mark. Residues 121–135 (QKPVLEEQVIKESDA) show a composition bias toward basic and acidic residues. The residue at position 153 (T153) is a Phosphothreonine. Position 156 is a phosphoserine (S156). Over residues 161–171 (SKKKPGQKKSK) the composition is skewed to basic residues. N-linked (GlcNAc...) asparagine glycosylation is found at N172, N435, N772, N904, and N1055. Positions 172 to 182 (NGSDDQDKKVE) are enriched in basic and acidic residues. Residues 330–1356 (LIHQLQEKDK…TKEKEHYQVL (1027 aa)) adopt a coiled-coil conformation. S1084 carries the phosphoserine modification. N-linked (GlcNAc...) asparagine glycans are attached at residues N1088 and N1263. Phosphoserine is present on S1313. An N-linked (GlcNAc...) asparagine glycan is attached at N1329.

It belongs to the kinectin family. As to quaternary structure, parallel homodimers formed between the membrane-bound and the cytosolic form, and also between 2 cytosolic forms. In terms of tissue distribution, high levels in peripheral blood lymphocytes, testis and ovary, lower levels in spleen, thymus, prostate, small intestine and colon.

The protein resides in the endoplasmic reticulum membrane. In terms of biological role, receptor for kinesin thus involved in kinesin-driven vesicle motility. Accumulates in integrin-based adhesion complexes (IAC) upon integrin aggregation by fibronectin. This Homo sapiens (Human) protein is Kinectin (KTN1).